A 293-amino-acid chain; its full sequence is 4-hydroxy-tetrahydrodipicolinate synthase (293 aa).

Thr45 is a binding site for pyruvate. The active-site Proton donor/acceptor is Tyr133. The active-site Schiff-base intermediate with substrate is the Lys161. Pyruvate is bound at residue Ile204.

Belongs to the DapA family. Homotetramer; dimer of dimers.

The protein localises to the cytoplasm. It carries out the reaction L-aspartate 4-semialdehyde + pyruvate = (2S,4S)-4-hydroxy-2,3,4,5-tetrahydrodipicolinate + H2O + H(+). Its pathway is amino-acid biosynthesis; L-lysine biosynthesis via DAP pathway; (S)-tetrahydrodipicolinate from L-aspartate: step 3/4. Functionally, catalyzes the condensation of (S)-aspartate-beta-semialdehyde [(S)-ASA] and pyruvate to 4-hydroxy-tetrahydrodipicolinate (HTPA). This chain is 4-hydroxy-tetrahydrodipicolinate synthase, found in Yersinia pseudotuberculosis serotype I (strain IP32953).